We begin with the raw amino-acid sequence, 236 residues long: Ribose-5-phosphate isomerase A 2 (236 aa).

Residues 31 to 34 (SGTT), 86 to 89 (DGPD), and 99 to 102 (KGGG) contribute to the substrate site. Glu-108 acts as the Proton acceptor in catalysis. Lys-126 serves as a coordination point for substrate.

It belongs to the ribose 5-phosphate isomerase family. In terms of assembly, homodimer.

It carries out the reaction aldehydo-D-ribose 5-phosphate = D-ribulose 5-phosphate. The protein operates within carbohydrate degradation; pentose phosphate pathway; D-ribose 5-phosphate from D-ribulose 5-phosphate (non-oxidative stage): step 1/1. Functionally, catalyzes the reversible conversion of ribose-5-phosphate to ribulose 5-phosphate. In Yersinia pestis, this protein is Ribose-5-phosphate isomerase A 2.